We begin with the raw amino-acid sequence, 694 residues long: DNA ligase (694 aa).

NAD(+) is bound by residues 41-45 (DAEFD), 91-92 (SL), and Glu-121. Residue Lys-123 is the N6-AMP-lysine intermediate of the active site. Residues Arg-144, Glu-184, Lys-300, and Lys-324 each coordinate NAD(+). Zn(2+) contacts are provided by Cys-418, Cys-421, Cys-437, and Cys-443. Residues 607-694 (SVLPTCEGLT…QGPPVQQVVD (88 aa)) form the BRCT domain.

Belongs to the NAD-dependent DNA ligase family. LigA subfamily. Requires Mg(2+) as cofactor. The cofactor is Mn(2+).

It catalyses the reaction NAD(+) + (deoxyribonucleotide)n-3'-hydroxyl + 5'-phospho-(deoxyribonucleotide)m = (deoxyribonucleotide)n+m + AMP + beta-nicotinamide D-nucleotide.. Its function is as follows. DNA ligase that catalyzes the formation of phosphodiester linkages between 5'-phosphoryl and 3'-hydroxyl groups in double-stranded DNA using NAD as a coenzyme and as the energy source for the reaction. It is essential for DNA replication and repair of damaged DNA. The polypeptide is DNA ligase (Mycobacterium leprae (strain TN)).